Reading from the N-terminus, the 251-residue chain is Probable phosphatase Sputcn32_1369 (251 aa).

Zn(2+)-binding residues include His8, His10, His16, His41, Glu74, His102, His132, Asp193, and His195.

It belongs to the PHP family. Zn(2+) serves as cofactor.

The protein is Probable phosphatase Sputcn32_1369 of Shewanella putrefaciens (strain CN-32 / ATCC BAA-453).